A 355-amino-acid polypeptide reads, in one-letter code: uncharacterized protein (355 aa).

The tract at residues 1-61 is disordered; the sequence is MNKKIEKNNN…PKRRGRRPKK (61 aa). Positions 18-37 are enriched in polar residues; it reads YESNTTDNQLIMKKNANSGS.

This is an uncharacterized protein from Acanthamoeba polyphaga mimivirus (APMV).